Here is a 169-residue protein sequence, read N- to C-terminus: U3 small nucleolar ribonucleoprotein protein imp3 (169 aa).

An S4 RNA-binding domain is found at 109-166 (RRLPVVMCRLKMCETVSTSVKYVEHGHVRVGPEVITDPAFFVTRNMEDFVTWVDSSKI).

This sequence belongs to the universal ribosomal protein uS4 family. Component of a heterotrimeric complex containing imp3, imp4 and mpp10.

It localises to the nucleus. The protein localises to the nucleolus. Component of the U3 small nucleolar ribonucleoprotein. Required for the early cleavages at sites A0, A1 and A2 during 18S ribosomal pre-RNA processing. This chain is U3 small nucleolar ribonucleoprotein protein imp3 (RBP), found in Pneumocystis carinii.